We begin with the raw amino-acid sequence, 84 residues long: ATP synthase subunit c (84 aa).

A run of 2 helical transmembrane segments spans residues 9 to 29 and 54 to 74; these read IIGASILLAFAALGTAIGFAI and IVAGLLDAIAMIAVGISLLFI.

The protein belongs to the ATPase C chain family. In terms of assembly, F-type ATPases have 2 components, F(1) - the catalytic core - and F(0) - the membrane proton channel. F(1) has five subunits: alpha(3), beta(3), gamma(1), delta(1), epsilon(1). F(0) has three main subunits: a(1), b(2) and c(10-14). The alpha and beta chains form an alternating ring which encloses part of the gamma chain. F(1) is attached to F(0) by a central stalk formed by the gamma and epsilon chains, while a peripheral stalk is formed by the delta and b chains.

The protein localises to the cell inner membrane. In terms of biological role, f(1)F(0) ATP synthase produces ATP from ADP in the presence of a proton or sodium gradient. F-type ATPases consist of two structural domains, F(1) containing the extramembraneous catalytic core and F(0) containing the membrane proton channel, linked together by a central stalk and a peripheral stalk. During catalysis, ATP synthesis in the catalytic domain of F(1) is coupled via a rotary mechanism of the central stalk subunits to proton translocation. Key component of the F(0) channel; it plays a direct role in translocation across the membrane. A homomeric c-ring of between 10-14 subunits forms the central stalk rotor element with the F(1) delta and epsilon subunits. The sequence is that of ATP synthase subunit c from Haemophilus influenzae (strain PittEE).